A 272-amino-acid chain; its full sequence is HMP-PP phosphatase (272 aa).

Residue Asp8 is the Nucleophile of the active site. Positions 8, 10, and 212 each coordinate Mg(2+).

It belongs to the HAD-like hydrolase superfamily. Cof family. It depends on Mg(2+) as a cofactor.

It carries out the reaction 4-amino-2-methyl-5-(diphosphooxymethyl)pyrimidine + H2O = 4-amino-2-methyl-5-(phosphooxymethyl)pyrimidine + phosphate + H(+). Its function is as follows. Catalyzes the hydrolysis of 4-amino-2-methyl-5-hydroxymethylpyrimidine pyrophosphate (HMP-PP) to 4-amino-2-methyl-5-hydroxymethylpyrimidine phosphate (HMP-P). This Salmonella choleraesuis (strain SC-B67) protein is HMP-PP phosphatase.